We begin with the raw amino-acid sequence, 426 residues long: Inhibin beta A chain (426 aa).

The first 20 residues, Met-1–Ser-20, serve as a signal peptide directing secretion. Positions Ser-21 to Arg-310 are excised as a propeptide. Residue Asn-165 is glycosylated (N-linked (GlcNAc...) asparagine). Polar residues predominate over residues Gln-177–Ser-186. Disordered regions lie at residues Gln-177–Arg-201 and Lys-260–Pro-291. Residues Lys-263–Gly-275 are compositionally biased toward basic and acidic residues. Cystine bridges form between Cys-314–Cys-322, Cys-321–Cys-391, Cys-350–Cys-423, and Cys-354–Cys-425.

This sequence belongs to the TGF-beta family. In terms of assembly, dimeric, linked by one or more disulfide bonds. Inhibin A is a dimer of alpha/INHA and beta-A/INHBA. Activin A is a homodimer of beta-A/INHBA. Activin AB is a dimer of beta-A/INHBA and beta-B/INHBB. Interacts with FST and FSTL3; these interactions prevent activin A interaction to its type II receptor. Activin A interacts with ACVR2A. Activin A interacts with BMPR2. Inhibin A interacts with ACVR1; this interaction creates a non-signaling complex (NSC) that inhibits ACVR1-mediated BMP signaling. Inhibin A interacts with ACVR2A.

Its subcellular location is the secreted. Its function is as follows. Inhibins/activins are involved in regulating a number of diverse functions such as hypothalamic and pituitary hormone secretion, gonadal hormone secretion, germ cell development and maturation, erythroid differentiation, insulin secretion, nerve cell survival, embryonic axial development or bone growth, depending on their subunit composition. In terms of biological role, activin A is a homodimer of INHBA that plays a role in several essential biological processes including embryonic development, stem cell maintenance and differentiation, haematopoiesis, cell proliferation and tissue fibrosis. Signals through type I (such as ACVR1B or ACVR1C) and type II receptors (such as ACVR2A, ACVR2B or BMPR2) which, upon ligand binding, phosphorylate SMAD2 and SMAD3 intracellular signaling mediators that form a complex with SMAD4, translocate to the nucleus and modulate gene expression. Can also activate alternative non-canonical intracellular signaling pathways including the p38 MAPK, extracellular signal-regulated kinases 1/2 (ERK1/2) and c-Jun N-terminal kinases (JNKs) to modulate cell migration and differentiation. Alternatively, promotes osteoblastic differentiation via ACVRL1-SMAD1/5/9 pathway. In addition, can engage the type I receptor ACVR1 to form an ACVR1-activin A-type II receptor non-signaling complex (NSC) that renders receptors unavailable for engagement with BMPs, hence resulting in an apparent inhibition of ACVR1-mediated BMP signaling. Functionally, inhibin A is a dimer of alpha/INHA and beta-A/INHBA that functions as a feedback regulator in the hypothalamic-pituitary-gonadal (HPG) axis. Inhibits the secretion of FSH from the anterior pituitary gland by acting on pituitary gonadotrope cells. Antagonizes activin A by binding to the proteoglycan, betaglycan, and forming a stable complex with and, thereby, sequestering type II activin receptors while excluding type I receptor. The sequence is that of Inhibin beta A chain (INHBA) from Equus caballus (Horse).